Consider the following 201-residue polypeptide: ATP-dependent Clp protease proteolytic subunit 1 (201 aa).

Ser-102 serves as the catalytic Nucleophile. Residue His-127 is part of the active site.

Belongs to the peptidase S14 family. As to quaternary structure, fourteen ClpP subunits assemble into 2 heptameric rings which stack back to back to give a disk-like structure with a central cavity, resembling the structure of eukaryotic proteasomes.

The protein resides in the cytoplasm. The enzyme catalyses Hydrolysis of proteins to small peptides in the presence of ATP and magnesium. alpha-casein is the usual test substrate. In the absence of ATP, only oligopeptides shorter than five residues are hydrolyzed (such as succinyl-Leu-Tyr-|-NHMec, and Leu-Tyr-Leu-|-Tyr-Trp, in which cleavage of the -Tyr-|-Leu- and -Tyr-|-Trp bonds also occurs).. Its function is as follows. Cleaves peptides in various proteins in a process that requires ATP hydrolysis. Has a chymotrypsin-like activity. Plays a major role in the degradation of misfolded proteins. This is ATP-dependent Clp protease proteolytic subunit 1 from Mesorhizobium japonicum (strain LMG 29417 / CECT 9101 / MAFF 303099) (Mesorhizobium loti (strain MAFF 303099)).